Here is a 221-residue protein sequence, read N- to C-terminus: Interleukin-12 subunit alpha (221 aa).

The signal sequence occupies residues 1 to 25; the sequence is MCPLRSLLLISTLVLLHHLPHLSLG. 3 disulfides stabilise this stretch: Cys-39–Cys-112, Cys-66–Cys-198, and Cys-87–Cys-125. Residue Asn-95 is glycosylated (N-linked (GlcNAc...) asparagine).

It belongs to the IL-6 superfamily. As to quaternary structure, heterodimer with IL12B; disulfide-linked. This heterodimer is known as interleukin IL-12. Heterodimer with EBI3/IL27B; not disulfide-linked. This heterodimer is known as interleukin IL-35. Interacts with NBR1; this interaction promotes IL-12 secretion.

Its subcellular location is the secreted. Heterodimerizes with IL12B to form the IL-12 cytokine or with EBI3/IL27B to form the IL-35 cytokine. IL-12 is primarily produced by professional antigen-presenting cells (APCs) such as B-cells and dendritic cells (DCs) as well as macrophages and granulocytes and regulates T-cell and natural killer-cell responses, induces the production of interferon-gamma (IFN-gamma), favors the differentiation of T-helper 1 (Th1) cells and is an important link between innate resistance and adaptive immunity. Mechanistically, exerts its biological effects through a receptor composed of IL12R1 and IL12R2 subunits. Binding to the receptor results in the rapid tyrosine phosphorylation of a number of cellular substrates including the JAK family kinases TYK2 and JAK2. In turn, recruited STAT4 gets phosphorylated and translocates to the nucleus where it regulates cytokine/growth factor responsive genes. As part of IL-35, plays essential roles in maintaining the immune homeostasis of the liver microenvironment and also functions as an immune-suppressive cytokine. Mediates biological events through unconventional receptors composed of IL12RB2 and gp130/IL6ST heterodimers or homodimers. Signaling requires the transcription factors STAT1 and STAT4, which form a unique heterodimer that binds to distinct DNA sites. This Bubalus carabanensis (Swamp type water buffalo) protein is Interleukin-12 subunit alpha (IL12A).